Here is a 389-residue protein sequence, read N- to C-terminus: Calreticulin (389 aa).

Positions 1–13 are cleaved as a signal peptide; sequence MFTLFLLIALSSA. Residues 12-189 form an N-domain region; the sequence is SAKVYFHETF…GVEKQEGKFD (178 aa). Residues Thr20, Asn52, and Asn53 each contribute to the Ca(2+) site. The cysteines at positions 96 and 130 are disulfide-linked. An alpha-D-glucoside-binding residues include Tyr100, Lys102, Tyr121, and Asp128. 7 tandem repeats follow at residues 183-194, 202-213, 219-230, 237-248, 252-262, 266-276, and 280-290. Residues 183–248 are 4 X approximate repeats; that stretch reads KQEGKFDEDW…NAKKPEEWND (66 aa). Residues 190–301 form a P-domain region; sequence EDWDMLAPKE…YVYDPELYKY (112 aa). A compositionally biased stretch (basic and acidic residues) spans 213–232; sequence DEKEIDDPNDKKPEGWDDIP. The tract at residues 213-256 is disordered; sequence DEKEIDDPNDKKPEGWDDIPKTIVDPNAKKPEEWNDEDDGEWEA. The segment at 252–290 is 3 X approximate repeats; it reads GEWEAPTIENPEYKGEWKPKRIPNPAYKGEWVHPQIANP. The tract at residues 302–389 is C-domain; the sequence is DSFAYIGIDV…IKKEENKEEL (88 aa). Asp310 lines the an alpha-D-glucoside pocket. A Ca(2+)-binding site is contributed by Asp321. The stretch at 329–388 forms a coiled coil; it reads IEEAEKEAKVILERNAAEKKMRDEIKEAEKQKEEEAKKEAEKQKEEETKEEIKKEENKEE. Positions 347–389 are disordered; the sequence is KKMRDEIKEAEKQKEEEAKKEAEKQKEEETKEEIKKEENKEEL. The Prevents secretion from ER signature appears at 386–389; it reads KEEL.

This sequence belongs to the calreticulin family. In terms of assembly, interacts (via C-terminus) with host C1q.

The protein localises to the endoplasmic reticulum lumen. It is found in the cell projection. The protein resides in the uropodium. Its subcellular location is the cell surface. It localises to the phagocytic cup. Functionally, molecular calcium-binding chaperone promoting folding, oligomeric assembly and quality control in the ER via the calreticulin/calnexin cycle. This lectin may interact transiently with almost all of the monoglucosylated glycoproteins that are synthesized in the ER. Plays a role in host cell phagocytosis, possibly by acting as a receptor for host C1q. Binding to C1q prevents the activation of the host classical complement pathway. Also, binds to apoptotic host cells independently of host C1q and collectins. This chain is Calreticulin, found in Entamoeba histolytica (strain ATCC 30459 / HM-1:IMSS / ABRM).